The chain runs to 284 residues: Bifunctional protein FolD (284 aa).

NADP(+) contacts are provided by residues 166–168 (GAS) and isoleucine 232.

This sequence belongs to the tetrahydrofolate dehydrogenase/cyclohydrolase family. Homodimer.

The enzyme catalyses (6R)-5,10-methylene-5,6,7,8-tetrahydrofolate + NADP(+) = (6R)-5,10-methenyltetrahydrofolate + NADPH. The catalysed reaction is (6R)-5,10-methenyltetrahydrofolate + H2O = (6R)-10-formyltetrahydrofolate + H(+). Its pathway is one-carbon metabolism; tetrahydrofolate interconversion. Functionally, catalyzes the oxidation of 5,10-methylenetetrahydrofolate to 5,10-methenyltetrahydrofolate and then the hydrolysis of 5,10-methenyltetrahydrofolate to 10-formyltetrahydrofolate. In Azotobacter vinelandii (strain DJ / ATCC BAA-1303), this protein is Bifunctional protein FolD.